We begin with the raw amino-acid sequence, 364 residues long: Aminomethyltransferase (364 aa).

It belongs to the GcvT family. As to quaternary structure, the glycine cleavage system is composed of four proteins: P, T, L and H.

The enzyme catalyses N(6)-[(R)-S(8)-aminomethyldihydrolipoyl]-L-lysyl-[protein] + (6S)-5,6,7,8-tetrahydrofolate = N(6)-[(R)-dihydrolipoyl]-L-lysyl-[protein] + (6R)-5,10-methylene-5,6,7,8-tetrahydrofolate + NH4(+). In terms of biological role, the glycine cleavage system catalyzes the degradation of glycine. The protein is Aminomethyltransferase of Escherichia coli (strain SMS-3-5 / SECEC).